The chain runs to 203 residues: MGEEFQVGATAVGIRAKDGVVLAAEKRVSYGFYTLSTAGKKVFIVNDKLAIASAGIIADMQALAKILKLNARSYELEVKKKPTVKAMAKLLSVVMFSRRFMPFYAEVLVGGVDEEGPHLIVMDPLGSLIEDNYAALGTGAKLAVSLLDASYRPDMTVEEAKKLAVQAVKAAIERDPVSGGGIDLVVVDGGGAREEEVKVQVVI.

A propeptide spans 1-9 (MGEEFQVGA) (removed in mature form; by autocatalysis). The active-site Nucleophile is Thr10.

This sequence belongs to the peptidase T1B family. As to quaternary structure, the 20S proteasome core is composed of 14 alpha and 14 beta subunits that assemble into four stacked heptameric rings, resulting in a barrel-shaped structure. The two inner rings, each composed of seven catalytic beta subunits, are sandwiched by two outer rings, each composed of seven alpha subunits. The catalytic chamber with the active sites is on the inside of the barrel. Has a gated structure, the ends of the cylinder being occluded by the N-termini of the alpha-subunits. Is capped at one or both ends by the proteasome regulatory ATPase, PAN.

The protein resides in the cytoplasm. It catalyses the reaction Cleavage of peptide bonds with very broad specificity.. Its activity is regulated as follows. The formation of the proteasomal ATPase PAN-20S proteasome complex, via the docking of the C-termini of PAN into the intersubunit pockets in the alpha-rings, triggers opening of the gate for substrate entry. Interconversion between the open-gate and close-gate conformations leads to a dynamic regulation of the 20S proteasome proteolysis activity. In terms of biological role, component of the proteasome core, a large protease complex with broad specificity involved in protein degradation. In Pyrobaculum neutrophilum (strain DSM 2338 / JCM 9278 / NBRC 100436 / V24Sta) (Thermoproteus neutrophilus), this protein is Proteasome subunit beta 2.